The sequence spans 274 residues: NADPH-dependent 7-cyano-7-deazaguanine reductase (274 aa).

80–82 (VES) provides a ligand contact to substrate. 82–83 (SK) serves as a coordination point for NADPH. The Thioimide intermediate role is filled by cysteine 181. The active-site Proton donor is the aspartate 188. Residue 220-221 (HE) coordinates substrate. 249-250 (RG) provides a ligand contact to NADPH.

The protein belongs to the GTP cyclohydrolase I family. QueF type 2 subfamily. As to quaternary structure, homodimer.

The protein localises to the cytoplasm. It catalyses the reaction 7-aminomethyl-7-carbaguanine + 2 NADP(+) = 7-cyano-7-deazaguanine + 2 NADPH + 3 H(+). It participates in tRNA modification; tRNA-queuosine biosynthesis. Catalyzes the NADPH-dependent reduction of 7-cyano-7-deazaguanine (preQ0) to 7-aminomethyl-7-deazaguanine (preQ1). The protein is NADPH-dependent 7-cyano-7-deazaguanine reductase of Burkholderia mallei (strain NCTC 10247).